Reading from the N-terminus, the 101-residue chain is Protein PIP-1 (101 aa).

The signal sequence occupies residues 1–23 (MGKCLLLPLLLVVLSSLLGFPQA). The UPAR/Ly6 domain occupies 24-101 (LECFQCQRVS…CHDSPFCNKF (78 aa)). Disulfide bonds link Cys-26–Cys-53, Cys-29–Cys-38, Cys-45–Cys-71, Cys-75–Cys-91, and Cys-92–Cys-98. Asn-84 carries an N-linked (GlcNAc...) asparagine glycan.

Its subcellular location is the secreted. The sequence is that of Protein PIP-1 from Sus scrofa (Pig).